Here is a 289-residue protein sequence, read N- to C-terminus: Probable acetolactate synthase small subunit (289 aa).

Phosphoserine is present on Ser34. The ACT domain occupies 72–149 (VFNCLVQNEP…AVLDYTGTSM (78 aa)).

The protein belongs to the acetolactate synthase small subunit family.

The protein localises to the cytoplasm. Its pathway is amino-acid biosynthesis; L-isoleucine biosynthesis; L-isoleucine from 2-oxobutanoate: step 1/4. The protein operates within amino-acid biosynthesis; L-valine biosynthesis; L-valine from pyruvate: step 1/4. In terms of biological role, stimulates activity of the acetolactate synthase catalytic subunit ilv1. This Schizosaccharomyces pombe (strain 972 / ATCC 24843) (Fission yeast) protein is Probable acetolactate synthase small subunit.